The primary structure comprises 93 residues: M-zodatoxin-Lt5a (93 aa).

The first 22 residues, 1–22 (MKYCVVILALLVALVCITESRS), serve as a signal peptide directing secretion. Positions 23 to 64 (TETGYAVAETLEDNDLDELQAYLEEIAEASEMEDFSNIEEAR) are excised as a propeptide. Positions 61–64 (EEAR) match the Processing quadruplet motif motif. Leu92 is subject to Leucine amide.

In terms of processing, cleavage of the propeptide depends on the processing quadruplet motif (XXXR, with at least one of X being E). Expressed by the venom gland.

It localises to the secreted. Has antimicrobial activity against. Gram-positive bacteria (A.globiformis VKM Ac-1112 (MIC=1.1 uM), and B.subtilis VKM B-501 (MIC=0.6 uM)), Gram-negative bacteria (E.coli DH5-alpha (MIC=0.6 uM), E.coli MH1 (MIC=0.6 uM), and P.aeruginosa PAO1 (MIC=18 uM)), and yeasts (P.pastoris GS115 (MIC&gt;37 uM), and S.cerevisiae Y190 (MIC&gt;37 uM)). Also has a moderate hemolytic activity against rabbit erythrocytes. Causes paralysis, but is not lethal when injected into insect (M.domestica) larvae. The chain is M-zodatoxin-Lt5a from Lachesana tarabaevi (Spider).